The primary structure comprises 1205 residues: Partitioning defective 3 homolog B (1205 aa).

Disordered stretches follow at residues 83 to 104 and 137 to 165; these read EPLH…PDAF and VRRS…SLKL. Ser100 is subject to Phosphoserine. The 89-residue stretch at 201-289 folds into the PDZ 1 domain; that stretch reads TRTVEISGEG…SPSVLLHVLP (89 aa). Positions 318–374 are disordered; it reads VPPPVHGKSGLKTANLTGTDSPETDASASLQQNKSPRVPRLGGKPSSPSLSPLMGFG. Positions 329–352 are enriched in polar residues; it reads KTANLTGTDSPETDASASLQQNKS. A phosphoserine mark is found at Ser346, Ser352, and Ser368. Over residues 356–374 the composition is skewed to low complexity; the sequence is PRLGGKPSSPSLSPLMGFG. PDZ domains lie at 383–468 and 498–585; these read KIDL…VIAR and EIPL…GMIQ. Phosphoserine is present on residues Ser635, Ser710, Ser728, Ser730, Ser746, Ser749, and Ser801. The segment at 707–743 is disordered; that stretch reads ASKSMDLVPDESKVHSLAGQKSESPSKDFGPTLGLKK. 2 disordered regions span residues 784 to 921 and 1111 to 1205; these read AIDK…KHQE and PYYP…TAAV. Positions 806-822 are enriched in polar residues; the sequence is HSGQGALNCESAPQGNS. 2 stretches are compositionally biased toward basic and acidic residues: residues 838–865 and 881–921; these read KEKE…DPER and KKED…KHQE. Ser1184 carries the post-translational modification Phosphoserine.

Belongs to the PAR3 family. In terms of assembly, interacts with PARD6B. Interacts with INSC/inscuteable. As to expression, highly expressed in kidney, lung and skeletal muscle. Expressed at intermediate levels in brain, heart, placenta, liver and pancreas. Isoform 1 is predominant, while isoform 2 and isoform 3 are expressed at lower levels.

It localises to the endomembrane system. The protein localises to the cell junction. It is found in the tight junction. Putative adapter protein involved in asymmetrical cell division and cell polarization processes. May play a role in the formation of epithelial tight junctions. The polypeptide is Partitioning defective 3 homolog B (PARD3B) (Homo sapiens (Human)).